We begin with the raw amino-acid sequence, 383 residues long: Ovalbumin (383 aa).

Residue Gly-2 is modified to N-acetylglycine. A signal peptide (not cleaved) is located at residues 22 to 48; it reads HHANDNMLYSPFAILSTLAMVFLGAKD. At Ser-69 the chain carries Phosphoserine. Cysteines 74 and 121 form a disulfide. N-linked (GlcNAc...) asparagine glycans are attached at residues Asn-293 and Asn-312. Ser-345 is subject to Phosphoserine.

This sequence belongs to the serpin family. Ov-serpin subfamily. The signal sequence is not cleaved. The functional signal for membrane translocation of ovalbumin becomes accessible when the nascent chain is 50 to 60 residues long. The hydrophobic sequence which lies between residues 27 and 43 folds back on the preceding residues to form an amphipathic hairpin structure which is the signal element recognized by the membrane. Major protein of egg white.

The protein localises to the secreted. Storage protein of egg white. Lack protease inhibitory activity. The chain is Ovalbumin (SERPINB14) from Coturnix coturnix (Common quail).